Here is a 340-residue protein sequence, read N- to C-terminus: Adenosine deaminase (340 aa).

Zn(2+)-binding residues include histidine 15 and histidine 17. Substrate is bound by residues histidine 17, aspartate 19, and glycine 172. Residue histidine 199 participates in Zn(2+) binding. The active-site Proton donor is glutamate 202. Aspartate 279 lines the Zn(2+) pocket.

The protein belongs to the metallo-dependent hydrolases superfamily. Adenosine and AMP deaminases family. Adenosine deaminase subfamily. Requires Zn(2+) as cofactor.

The catalysed reaction is adenosine + H2O + H(+) = inosine + NH4(+). It carries out the reaction 2'-deoxyadenosine + H2O + H(+) = 2'-deoxyinosine + NH4(+). Its function is as follows. Catalyzes the hydrolytic deamination of adenosine and 2-deoxyadenosine. The sequence is that of Adenosine deaminase from Streptococcus agalactiae serotype Ia (strain ATCC 27591 / A909 / CDC SS700).